Here is a 449-residue protein sequence, read N- to C-terminus: Heterogeneous nuclear ribonucleoprotein H (449 aa).

At Met-1 the chain carries N-acetylmethionine. Position 2 is an N-acetylmethionine; in Heterogeneous nuclear ribonucleoprotein H, N-terminally processed (Met-2). In terms of domain architecture, RRM 1 spans 11 to 90; it reads FVVKVRGLPW…RYVEVFKSNN (80 aa). Ser-23 is subject to Phosphoserine. Lys-35 is covalently cross-linked (Glycyl lysine isopeptide (Lys-Gly) (interchain with G-Cter in SUMO2)). Ser-54 and Ser-63 each carry phosphoserine. Glycyl lysine isopeptide (Lys-Gly) (interchain with G-Cter in SUMO2) cross-links involve residues Lys-87 and Lys-98. The 78-residue stretch at 111–188 folds into the RRM 2 domain; the sequence is GFVRLRGLPF…RYIEIFKSSR (78 aa). A Dimethylated arginine; alternate modification is found at Arg-233. Arg-233 carries the omega-N-methylarginine; alternate modification. Residues 234–249 form a 1-1 repeat; it reads GAYGGGYGGYDDYNGY. Residues 234–433 are 2 X 16 AA Gly-rich approximate repeats; that stretch reads GAYGGGYGGY…YGGQSSMSGY (200 aa). The residue at position 246 (Tyr-246) is a Phosphotyrosine. The RRM 3 domain occupies 289 to 364; the sequence is HCVHMRGLPY…RYVELFLNST (76 aa). Position 310 is a phosphoserine (Ser-310). Tandem repeats lie at residues 354 to 372, 374 to 392, and 418 to 433. The 2 X 19 AA perfect repeats stretch occupies residues 354–392; the sequence is HRYVELFLNSTAGASGGAYEHRYVELFLNSTAGASGGAY.

As to quaternary structure, part of a ternary complex containing FUBP2, PTBP1, PTBP2 and HNRNPH1. Identified in the spliceosome C complex. Interacts with IGF2BP1. Interacts with CUGBP1; the interaction is RNA-dependent. Interacts with MBNL1; the interaction in RNA-independent.

Its subcellular location is the nucleus. It localises to the nucleoplasm. Functionally, this protein is a component of the heterogeneous nuclear ribonucleoprotein (hnRNP) complexes which provide the substrate for the processing events that pre-mRNAs undergo before becoming functional, translatable mRNAs in the cytoplasm. Mediates pre-mRNA alternative splicing regulation. Inhibits, together with CUGBP1, insulin receptor (IR) pre-mRNA exon 11 inclusion in myoblast. Binds to the IR RNA. Binds poly(RG). This is Heterogeneous nuclear ribonucleoprotein H (Hnrnph1) from Rattus norvegicus (Rat).